The sequence spans 121 residues: Flagellar protein FliT (121 aa).

The segment at 1-50 (MNHAPHLYFAWQQLVEKSQLMLRLATEEQWDELIASEMAYVNAVQEIAHL) is required for homodimerization. Positions 60-98 (MQEQLRPMLRLILDNESKVKQLLQIRMDELAKLVGQSSV) are fliD binding.

The protein belongs to the FliT family. In terms of assembly, homodimer. Interacts with FliD and FlhC.

Its subcellular location is the cytoplasm. The protein resides in the cytosol. Functionally, dual-function protein that regulates the transcription of class 2 flagellar operons and that also acts as an export chaperone for the filament-capping protein FliD. As a transcriptional regulator, acts as an anti-FlhDC factor; it directly binds FlhC, thus inhibiting the binding of the FlhC/FlhD complex to class 2 promoters, resulting in decreased expression of class 2 flagellar operons. As a chaperone, effects FliD transition to the membrane by preventing its premature polymerization, and by directing it to the export apparatus. The polypeptide is Flagellar protein FliT (Escherichia coli O8 (strain IAI1)).